We begin with the raw amino-acid sequence, 419 residues long: Histone acetyltransferase type B catalytic subunit (419 aa).

Residue Ala2 is modified to N-acetylalanine. An N6-acetyllysine mark is found at Lys9 and Lys15. The tract at residues 62–64 (DDE) is interaction with histone H4 N-terminus. A Phosphoserine modification is found at Ser190. The interval 225-227 (YNY) is interaction with histone H4 N-terminus. Residues 241 to 243 (MLI) and 248 to 254 (QGQGHGA) each bind acetyl-CoA. Glu276 functions as the Proton donor/acceptor in the catalytic mechanism. At Ser343 the chain carries Phosphoserine.

It belongs to the HAT1 family. Catalytic subunit of the type B histone acetyltransferase (HAT) complex, composed of RBBP7 and HAT1. Interacts with histones H4 and H2A. The interaction is dependent of the ability of RBBP7 to bind to the N-terminus of histones. Component of the histone H3.1 and H3.3 complexes. Post-translationally, phosphorylated by AMPK at Ser-190; phosphorylation increases HAT1 activity.

Its subcellular location is the nucleus matrix. The protein resides in the mitochondrion. The enzyme catalyses L-lysyl-[protein] + acetyl-CoA = N(6)-acetyl-L-lysyl-[protein] + CoA + H(+). In terms of biological role, histone acetyltransferase that plays a role in different biological processes including cell cycle progression, glucose metabolism, histone production or DNA damage repair. Coordinates histone production and acetylation via H4 promoter binding. Acetylates histone H4 at 'Lys-5' (H4K5ac) and 'Lys-12' (H4K12ac) and, to a lesser extent, histone H2A at 'Lys-5' (H2AK5ac). Drives H4 production by chromatin binding to support chromatin replication and acetylation. Since transcription of H4 genes is tightly coupled to S-phase, plays an important role in S-phase entry and progression. Promotes homologous recombination in DNA repair by facilitating histone turnover and incorporation of acetylated H3.3 at sites of double-strand breaks. In addition, acetylates other substrates such as chromatin-related proteins. Also acetylates RSAD2 which mediates the interaction of ubiquitin ligase UBE4A with RSAD2 leading to RSAD2 ubiquitination and subsequent degradation. This is Histone acetyltransferase type B catalytic subunit (Hat1) from Rattus norvegicus (Rat).